The primary structure comprises 419 residues: UDP-N-acetylglucosamine 1-carboxyvinyltransferase (419 aa).

22-23 (KN) contributes to the phosphoenolpyruvate binding site. UDP-N-acetyl-alpha-D-glucosamine is bound at residue arginine 95. Residue cysteine 119 is the Proton donor of the active site. At cysteine 119 the chain carries 2-(S-cysteinyl)pyruvic acid O-phosphothioketal. Residues 164-167 (KVSV), aspartate 308, and isoleucine 330 contribute to the UDP-N-acetyl-alpha-D-glucosamine site.

Belongs to the EPSP synthase family. MurA subfamily.

The protein localises to the cytoplasm. It carries out the reaction phosphoenolpyruvate + UDP-N-acetyl-alpha-D-glucosamine = UDP-N-acetyl-3-O-(1-carboxyvinyl)-alpha-D-glucosamine + phosphate. It participates in cell wall biogenesis; peptidoglycan biosynthesis. Cell wall formation. Adds enolpyruvyl to UDP-N-acetylglucosamine. The sequence is that of UDP-N-acetylglucosamine 1-carboxyvinyltransferase from Rickettsia conorii (strain ATCC VR-613 / Malish 7).